Reading from the N-terminus, the 114-residue chain is UPF0342 protein NT01CX_2274 (114 aa).

The protein belongs to the UPF0342 family.

The sequence is that of UPF0342 protein NT01CX_2274 from Clostridium novyi (strain NT).